Consider the following 437-residue polypeptide: tRNA(Ile)-lysidine synthase (437 aa).

22 to 27 contributes to the ATP binding site; it reads SGGLDS.

It belongs to the tRNA(Ile)-lysidine synthase family.

The protein localises to the cytoplasm. It carries out the reaction cytidine(34) in tRNA(Ile2) + L-lysine + ATP = lysidine(34) in tRNA(Ile2) + AMP + diphosphate + H(+). Functionally, ligates lysine onto the cytidine present at position 34 of the AUA codon-specific tRNA(Ile) that contains the anticodon CAU, in an ATP-dependent manner. Cytidine is converted to lysidine, thus changing the amino acid specificity of the tRNA from methionine to isoleucine. This Xylella fastidiosa (strain Temecula1 / ATCC 700964) protein is tRNA(Ile)-lysidine synthase.